Reading from the N-terminus, the 340-residue chain is Ketol-acid reductoisomerase (NADP(+)) (340 aa).

Residues 2–182 (AELYYDNQAD…GCTRAGVLRT (181 aa)) enclose the KARI N-terminal Rossmann domain. NADP(+) is bound by residues 25 to 28 (FGSQ), Ser-51, Ser-53, and 83 to 86 (DIGQ). The active site involves His-108. Gly-134 serves as a coordination point for NADP(+). The KARI C-terminal knotted domain occupies 183–328 (TFAEETETDL…RELRRMMPFV (146 aa)). Mg(2+) is bound by residues Asp-191, Glu-195, Glu-227, and Glu-231. Ser-252 serves as a coordination point for substrate.

This sequence belongs to the ketol-acid reductoisomerase family. Requires Mg(2+) as cofactor.

It carries out the reaction (2R)-2,3-dihydroxy-3-methylbutanoate + NADP(+) = (2S)-2-acetolactate + NADPH + H(+). The catalysed reaction is (2R,3R)-2,3-dihydroxy-3-methylpentanoate + NADP(+) = (S)-2-ethyl-2-hydroxy-3-oxobutanoate + NADPH + H(+). It functions in the pathway amino-acid biosynthesis; L-isoleucine biosynthesis; L-isoleucine from 2-oxobutanoate: step 2/4. It participates in amino-acid biosynthesis; L-valine biosynthesis; L-valine from pyruvate: step 2/4. Its function is as follows. Involved in the biosynthesis of branched-chain amino acids (BCAA). Catalyzes an alkyl-migration followed by a ketol-acid reduction of (S)-2-acetolactate (S2AL) to yield (R)-2,3-dihydroxy-isovalerate. In the isomerase reaction, S2AL is rearranged via a Mg-dependent methyl migration to produce 3-hydroxy-3-methyl-2-ketobutyrate (HMKB). In the reductase reaction, this 2-ketoacid undergoes a metal-dependent reduction by NADPH to yield (R)-2,3-dihydroxy-isovalerate. In Chloroflexus aggregans (strain MD-66 / DSM 9485), this protein is Ketol-acid reductoisomerase (NADP(+)).